A 353-amino-acid polypeptide reads, in one-letter code: MRANGSELNGTVLPRDPPAEGSPRRPPWVTSTLATILIFTIVVDLLGNLLVILSVYRNKKLRNAGNIFVVSLAIADLVVAIYPYPLVLTSVFHNGWNLGYLHCQISGFLMGLSVIGSIFNITGIAINRYCYICHSLKYDKLYSDKNSLCYVGLIWVLTVVAIVPNLFVGSLQYDPRIYSCTFAQSVSSAYTIAVVFFHFILPIAIVTYCYLRIWILVIQVRRRVKPDNNPRLKPHDFRNFVTMFVVFVLFAVCWAPLNFIGLAVAVDPETIIPRIPEWLFVSSYYMAYFNSCLNAIIYGLLNQNFRREYKKIVVSFCTAKAFFQDSSNDAADRIRSKPSPLITNNNQVKVDSV.

The segment at 1–26 is disordered; the sequence is MRANGSELNGTVLPRDPPAEGSPRRP. The Extracellular segment spans residues 1-32; that stretch reads MRANGSELNGTVLPRDPPAEGSPRRPPWVTST. 2 N-linked (GlcNAc...) asparagine glycosylation sites follow: Asn4 and Asn9. A helical transmembrane segment spans residues 33 to 53; that stretch reads LATILIFTIVVDLLGNLLVIL. The Cytoplasmic segment spans residues 54 to 66; that stretch reads SVYRNKKLRNAGN. Residues 67–87 form a helical membrane-spanning segment; that stretch reads IFVVSLAIADLVVAIYPYPLV. Residues 88–105 are Extracellular-facing; that stretch reads LTSVFHNGWNLGYLHCQI. Cys103 and Cys180 are disulfide-bonded. The helical transmembrane segment at 106–126 threads the bilayer; that stretch reads SGFLMGLSVIGSIFNITGIAI. Topologically, residues 127 to 145 are cytoplasmic; the sequence is NRYCYICHSLKYDKLYSDK. Residues 146-166 form a helical membrane-spanning segment; the sequence is NSLCYVGLIWVLTVVAIVPNL. The Extracellular portion of the chain corresponds to 167-190; that stretch reads FVGSLQYDPRIYSCTFAQSVSSAY. Residues 191 to 211 form a helical membrane-spanning segment; that stretch reads TIAVVFFHFILPIAIVTYCYL. Residues 212-243 lie on the Cytoplasmic side of the membrane; sequence RIWILVIQVRRRVKPDNNPRLKPHDFRNFVTM. A helical transmembrane segment spans residues 244 to 264; sequence FVVFVLFAVCWAPLNFIGLAV. Topologically, residues 265–277 are extracellular; sequence AVDPETIIPRIPE. The helical transmembrane segment at 278–298 threads the bilayer; it reads WLFVSSYYMAYFNSCLNAIIY. The Cytoplasmic portion of the chain corresponds to 299–353; it reads GLLNQNFRREYKKIVVSFCTAKAFFQDSSNDAADRIRSKPSPLITNNNQVKVDSV.

Belongs to the G-protein coupled receptor 1 family. Expressed in optic tectum and retina, less in neostriatum, hypothalamus and thalamus.

It localises to the cell membrane. Its function is as follows. High affinity receptor for melatonin. The activity of this receptor is mediated by pertussis toxin sensitive G proteins that inhibits adenylate cyclase activity. The protein is Melatonin receptor type 1A of Gallus gallus (Chicken).